A 444-amino-acid polypeptide reads, in one-letter code: Jacalin-related lectin 42 (444 aa).

Residue A2 is modified to N-acetylalanine. Jacalin-type lectin domains lie at 2-143, 146-289, and 297-441; these read ALMV…YYIR, ATKS…YYAP, and TEKL…HVIP.

This sequence belongs to the jacalin lectin family.

The sequence is that of Jacalin-related lectin 42 (JAL42) from Arabidopsis thaliana (Mouse-ear cress).